Reading from the N-terminus, the 864-residue chain is Leucine--tRNA ligase (864 aa).

The 'HIGH' region signature appears at 42-52; the sequence is PYPSGKLHMGH. The 'KMSKS' region signature appears at 624-628; sequence KMSKS. ATP is bound at residue Lys627.

Belongs to the class-I aminoacyl-tRNA synthetase family.

The protein localises to the cytoplasm. It catalyses the reaction tRNA(Leu) + L-leucine + ATP = L-leucyl-tRNA(Leu) + AMP + diphosphate. This chain is Leucine--tRNA ligase, found in Burkholderia ambifaria (strain ATCC BAA-244 / DSM 16087 / CCUG 44356 / LMG 19182 / AMMD) (Burkholderia cepacia (strain AMMD)).